Consider the following 402-residue polypeptide: Coiled-coil domain-containing protein 188 (402 aa).

3 disordered regions span residues 1–30 (MEGLKTLGPCGHPHPQCPPTPASSSHGGGL), 50–74 (HSVQSQRPFPVPGAGGSGPTVEGEA), and 108–131 (HPGSNQGAPRQGGSIGSGTRPCPC). Positions 154 to 189 (GLLGSAEQSFLQLEQENHSLKRQNQELREQLGALLG) form a coiled coil. A helical transmembrane segment spans residues 347–363 (LLLGALLVWTAAYVYVV).

The protein localises to the membrane. This chain is Coiled-coil domain-containing protein 188, found in Homo sapiens (Human).